The following is a 258-amino-acid chain: HVA22-like protein j (258 aa).

Residues 153-258 (AANQPPTERN…RSNSRTQPAA (106 aa)) are disordered. Polar residues predominate over residues 156-169 (QPPTERNVNMNAQS). Residues 206–215 (WPPPTPPPTP) are compositionally biased toward pro residues.

The protein belongs to the DP1 family.

The chain is HVA22-like protein j (HVA22J) from Arabidopsis thaliana (Mouse-ear cress).